Here is a 104-residue protein sequence, read N- to C-terminus: Large ribosomal subunit protein bL21 (104 aa).

This sequence belongs to the bacterial ribosomal protein bL21 family. In terms of assembly, part of the 50S ribosomal subunit. Contacts protein L20.

This protein binds to 23S rRNA in the presence of protein L20. The polypeptide is Large ribosomal subunit protein bL21 (Azobacteroides pseudotrichonymphae genomovar. CFP2).